We begin with the raw amino-acid sequence, 226 residues long: Uridylate kinase (226 aa).

9–13 contributes to the ATP binding site; the sequence is KVSGK. Position 46 (glycine 46) interacts with UMP. ATP is bound by residues glycine 47 and arginine 51. Residues aspartate 68 and 116–122 contribute to the UMP site; that span reads FQPGQST. Threonine 142, tyrosine 148, and aspartate 151 together coordinate ATP.

This sequence belongs to the UMP kinase family. As to quaternary structure, homohexamer.

Its subcellular location is the cytoplasm. It carries out the reaction UMP + ATP = UDP + ADP. The protein operates within pyrimidine metabolism; CTP biosynthesis via de novo pathway; UDP from UMP (UMPK route): step 1/1. With respect to regulation, inhibited by UTP. Catalyzes the reversible phosphorylation of UMP to UDP. In Hyperthermus butylicus (strain DSM 5456 / JCM 9403 / PLM1-5), this protein is Uridylate kinase.